The following is a 298-amino-acid chain: Protease HtpX (298 aa).

A run of 2 helical transmembrane segments spans residues isoleucine 4–leucine 24 and threonine 41–isoleucine 61. Histidine 147 contributes to the Zn(2+) binding site. Glutamate 148 is a catalytic residue. Zn(2+) is bound at residue histidine 151. The next 2 membrane-spanning stretches (helical) occupy residues leucine 162–isoleucine 182 and glycine 193–alanine 213. Glutamate 225 provides a ligand contact to Zn(2+).

This sequence belongs to the peptidase M48B family. It depends on Zn(2+) as a cofactor.

The protein resides in the cell inner membrane. The protein is Protease HtpX of Alcanivorax borkumensis (strain ATCC 700651 / DSM 11573 / NCIMB 13689 / SK2).